Consider the following 345-residue polypeptide: 3-isopropylmalate dehydrogenase (345 aa).

Residue 76-87 (GPKYDNAPVRPE) coordinates NAD(+). The substrate site is built by Arg94, Arg104, Arg132, and Asp216. Mg(2+) is bound by residues Asp216, Asp240, and Asp244. 274 to 286 (GSAPDIAGQGIAN) contributes to the NAD(+) binding site.

This sequence belongs to the isocitrate and isopropylmalate dehydrogenases family. LeuB type 1 subfamily. In terms of assembly, homodimer. Mg(2+) is required as a cofactor. Requires Mn(2+) as cofactor.

It localises to the cytoplasm. The enzyme catalyses (2R,3S)-3-isopropylmalate + NAD(+) = 4-methyl-2-oxopentanoate + CO2 + NADH. Its pathway is amino-acid biosynthesis; L-leucine biosynthesis; L-leucine from 3-methyl-2-oxobutanoate: step 3/4. Its function is as follows. Catalyzes the oxidation of 3-carboxy-2-hydroxy-4-methylpentanoate (3-isopropylmalate) to 3-carboxy-4-methyl-2-oxopentanoate. The product decarboxylates to 4-methyl-2 oxopentanoate. This Streptococcus thermophilus (strain CNRZ 1066) protein is 3-isopropylmalate dehydrogenase.